The following is a 196-amino-acid chain: Peptidyl-tRNA hydrolase (196 aa).

Tyr17 serves as a coordination point for tRNA. The active-site Proton acceptor is the His22. Positions 68, 70, and 116 each coordinate tRNA.

This sequence belongs to the PTH family. In terms of assembly, monomer.

The protein localises to the cytoplasm. The enzyme catalyses an N-acyl-L-alpha-aminoacyl-tRNA + H2O = an N-acyl-L-amino acid + a tRNA + H(+). Functionally, hydrolyzes ribosome-free peptidyl-tRNAs (with 1 or more amino acids incorporated), which drop off the ribosome during protein synthesis, or as a result of ribosome stalling. In terms of biological role, catalyzes the release of premature peptidyl moieties from peptidyl-tRNA molecules trapped in stalled 50S ribosomal subunits, and thus maintains levels of free tRNAs and 50S ribosomes. The protein is Peptidyl-tRNA hydrolase of Photorhabdus laumondii subsp. laumondii (strain DSM 15139 / CIP 105565 / TT01) (Photorhabdus luminescens subsp. laumondii).